The primary structure comprises 83 residues: Small ribosomal subunit protein bS18A (83 aa).

Belongs to the bacterial ribosomal protein bS18 family. As to quaternary structure, part of the 30S ribosomal subunit. Forms a tight heterodimer with protein bS6.

Its function is as follows. Binds as a heterodimer with protein bS6 to the central domain of the 16S rRNA, where it helps stabilize the platform of the 30S subunit. This chain is Small ribosomal subunit protein bS18A, found in Nocardia farcinica (strain IFM 10152).